We begin with the raw amino-acid sequence, 291 residues long: Phosphate import ATP-binding protein PstB (291 aa).

The region spanning 44–286 (VKAREVNVFY…PEEKRTQDYI (243 aa)) is the ABC transporter domain. 76 to 83 (GPSGCGKS) contacts ATP.

The protein belongs to the ABC transporter superfamily. Phosphate importer (TC 3.A.1.7) family. In terms of assembly, the complex is composed of two ATP-binding proteins (PstB), two transmembrane proteins (PstC and PstA) and a solute-binding protein (PstS).

The protein localises to the cell inner membrane. It catalyses the reaction phosphate(out) + ATP + H2O = ADP + 2 phosphate(in) + H(+). In terms of biological role, part of the ABC transporter complex PstSACB involved in phosphate import. Responsible for energy coupling to the transport system. The chain is Phosphate import ATP-binding protein PstB from Chelativorans sp. (strain BNC1).